A 276-amino-acid chain; its full sequence is Phosphatidylglycerol--prolipoprotein diacylglyceryl transferase (276 aa).

7 consecutive transmembrane segments (helical) span residues 17–37 (LAIR…LWFG), 59–79 (MLFF…VLFY), 95–115 (WEGG…MWLF), 129–149 (FIAP…FING), 176–196 (SQLY…WLFA), 202–222 (MGAV…AAEF), and 237–257 (LSMG…MVVW). R142 is a binding site for a 1,2-diacyl-sn-glycero-3-phospho-(1'-sn-glycerol).

The protein belongs to the Lgt family.

It localises to the cell inner membrane. It catalyses the reaction L-cysteinyl-[prolipoprotein] + a 1,2-diacyl-sn-glycero-3-phospho-(1'-sn-glycerol) = an S-1,2-diacyl-sn-glyceryl-L-cysteinyl-[prolipoprotein] + sn-glycerol 1-phosphate + H(+). Its pathway is protein modification; lipoprotein biosynthesis (diacylglyceryl transfer). Its function is as follows. Catalyzes the transfer of the diacylglyceryl group from phosphatidylglycerol to the sulfhydryl group of the N-terminal cysteine of a prolipoprotein, the first step in the formation of mature lipoproteins. The protein is Phosphatidylglycerol--prolipoprotein diacylglyceryl transferase of Cupriavidus pinatubonensis (strain JMP 134 / LMG 1197) (Cupriavidus necator (strain JMP 134)).